Reading from the N-terminus, the 105-residue chain is MHLFIGVSLRPLGHGIPAPYAVEDICTAKPRDIPVNPICIYRNPEKKPQERRGAGAGEGQDPGVHKPPASGSCPGPTRAFGRRSFLQAPGPTPRTMRRTSSCRPS.

The signal sequence occupies residues M1–P17. A disordered region spans residues I38–S105. A compositionally biased stretch (basic and acidic residues) spans N43–G53.

It belongs to the serpin family. As to quaternary structure, forms protease inhibiting heterodimer with TMPRSS7. Plasma.

Its subcellular location is the secreted. It localises to the extracellular space. Functionally, most important serine protease inhibitor in plasma that regulates the blood coagulation cascade. AT-III inhibits thrombin, matriptase-3/TMPRSS7, as well as factors IXa, Xa and XIa. Its inhibitory activity is greatly enhanced in the presence of heparin. In Gallus gallus (Chicken), this protein is Antithrombin-III (SERPINC1).